Reading from the N-terminus, the 368-residue chain is Aspartate-semialdehyde dehydrogenase (368 aa).

NADP(+) contacts are provided by residues 10 to 13, 37 to 38, and Gln72; these read RGMV and TS. A phosphate-binding site is contributed by Arg101. Cys134 serves as the catalytic Acyl-thioester intermediate. NADP(+) contacts are provided by residues 160–161 and Pro191; that span reads SG. A substrate-binding site is contributed by Glu239. Lys242 contributes to the phosphate binding site. Arg266 provides a ligand contact to substrate. His273 serves as the catalytic Proton acceptor. Gln349 lines the NADP(+) pocket.

Belongs to the aspartate-semialdehyde dehydrogenase family. Homodimer.

The catalysed reaction is L-aspartate 4-semialdehyde + phosphate + NADP(+) = 4-phospho-L-aspartate + NADPH + H(+). The protein operates within amino-acid biosynthesis; L-lysine biosynthesis via DAP pathway; (S)-tetrahydrodipicolinate from L-aspartate: step 2/4. Its pathway is amino-acid biosynthesis; L-methionine biosynthesis via de novo pathway; L-homoserine from L-aspartate: step 2/3. It participates in amino-acid biosynthesis; L-threonine biosynthesis; L-threonine from L-aspartate: step 2/5. Its function is as follows. Catalyzes the NADPH-dependent formation of L-aspartate-semialdehyde (L-ASA) by the reductive dephosphorylation of L-aspartyl-4-phosphate. The polypeptide is Aspartate-semialdehyde dehydrogenase (Azotobacter vinelandii).